A 206-amino-acid polypeptide reads, in one-letter code: RILP-like protein 2 (206 aa).

Residues 1–29 (MEEPPLREEEEEEEEDEAGPEGALGKSPL) are disordered. The span at 8-19 (EEEEEEEEDEAG) shows a compositional bias: acidic residues. Residues 19 to 108 (GPEGALGKSP…RREGSAAGPE (90 aa)) enclose the RH1 domain. Positions 67–159 (LEMLETLVNE…VQEELQCYKS (93 aa)) form a coiled coil. The region spanning 125–197 (RPRFTLQELR…KEEKTIIRKL (73 aa)) is the RH2 domain. The interval 161–189 (LIPPREGPGGRREKEALFPRGSNANSNKE) is disordered. The span at 168-177 (PGGRREKEAL) shows a compositional bias: basic and acidic residues.

Belongs to the RILPL family. Homodimer. Interacts with RAC1. Interacts (via N-terminus) with MYO5A, the interaction is required for its role in dendrite formation. Interacts with RAB8A; interaction is dependent on the phosphorylation of RAB8A on 'Thr-72'. Interacts with RAB10 and RAB12; interaction is dependent on the phosphorylation of 'Thr-73' on RAB10 and 'Ser-105' on RAB12.

Its subcellular location is the cytoplasm. The protein resides in the cytosol. The protein localises to the cytoskeleton. It localises to the microtubule organizing center. It is found in the centrosome. Its subcellular location is the cell projection. The protein resides in the cilium. Involved in cell shape and neuronal morphogenesis, positively regulating the establishment and maintenance of dendritic spines. Plays a role in cellular protein transport, including protein transport away from primary cilia. May function via activation of RAC1 and PAK1. This is RILP-like protein 2 (RILPL2) from Bos taurus (Bovine).